The sequence spans 2253 residues: Polycystin family receptor for egg jelly (2253 aa).

The first 19 residues, 1–19 (MRPGPALLLLGVGLSLSVG), serve as a signal peptide directing secretion. Topologically, residues 20-1184 (RLPLPPVPRG…NIIKSLHQNP (1165 aa)) are extracellular. Residues 154-169 (RPASPAARVSPRSAAP) are compositionally biased toward low complexity. Residues 154–177 (RPASPAARVSPRSAAPGPRPQQGF) form a disordered region. N-linked (GlcNAc...) asparagine glycans are attached at residues Asn-197, Asn-242, Asn-295, Asn-306, Asn-345, Asn-349, Asn-481, Asn-674, Asn-849, Asn-890, Asn-923, Asn-939, Asn-958, and Asn-965. One can recognise an REJ domain in the interval 215 to 913 (CVIQRVRINT…STMFCDFTND (699 aa)). The helical transmembrane segment at 1185 to 1205 (VTLFTVLFIILLYVGLAFWAL) threads the bilayer. The Cytoplasmic segment spans residues 1206–1389 (YRDEMDQHLR…VAKTFNRLQR (184 aa)). The region spanning 1230 to 1347 (LCYLVTIFTG…TLDRTFHVTH (118 aa)) is the PLAT domain. Residues 1390 to 1410 (LSCCLAMLLSSLLCNIMFFNL) form a helical membrane-spanning segment. The Extracellular portion of the chain corresponds to 1411–1427 (NRQEQTESRERKYMRSM). The helical transmembrane segment at 1428–1448 (MIGIESVLITIPVQLLITFLF) threads the bilayer. Topologically, residues 1449 to 1576 (TCSQRKPQAD…KPRIVLPWWC (128 aa)) are cytoplasmic. The tract at residues 1494–1562 (PREVAKPASK…EQHPSQKDLQ (69 aa)) is disordered. Positions 1517–1527 (SKPKHRHRKAQ) are enriched in basic residues. A compositionally biased stretch (basic and acidic residues) spans 1549-1558 (DVHSEQHPSQ). The chain crosses the membrane as a helical span at residues 1577 to 1597 (VYVAWFLVFATSSISSFFIVF). Topologically, residues 1598-1607 (YGLTYGYDKS) are extracellular. The chain crosses the membrane as a helical span at residues 1608–1628 (IEWLFASFCSFCQSVLLVQPS). Residues 1629–1708 (KIILLSGFRT…RKKRIKRRAL (80 aa)) are Cytoplasmic-facing. Residues 1709–1729 (LFLSYILTHFIFLALLLILIV) traverse the membrane as a helical segment. Topologically, residues 1730–1966 (LLRHTDCFYY…FDRKASAEIY (237 aa)) are extracellular. 3 N-linked (GlcNAc...) asparagine glycosylation sites follow: Asn-1836, Asn-1893, and Asn-1944. Residues 1967-1987 (LYVAILIFFLAYVVDEGCIIM) form a helical membrane-spanning segment. Residues 1988 to 1996 (QERASYVRS) lie on the Cytoplasmic side of the membrane. A helical membrane pass occupies residues 1997 to 2017 (VYNLLNFALKCIFTVLIVLFL). At 2018–2042 (RKHFLATGIIRFYLSNPEDFIPFHA) the chain is on the extracellular side. The chain crosses the membrane as a helical span at residues 2043 to 2063 (VSQVDHIMRIILGFLLFLTIL). Topologically, residues 2064–2091 (KTLRYSRFFYDVRLAQRAIQAALPGICH) are cytoplasmic. A helical transmembrane segment spans residues 2092–2112 (MAFVVSVYFFVYMAFGYLVFG). At 2113-2145 (QHEWNYSNLIHSTQTVFSYCVSAFQNTEFSNNR) the chain is on the extracellular side. The helical transmembrane segment at 2146–2166 (ILGVLFLSSFMLVMICVLINL) threads the bilayer. The Cytoplasmic portion of the chain corresponds to 2167–2253 (FQAVILSAYE…NGKKMVYLVV (87 aa)).

The protein belongs to the polycystin family. Exclusively expressed in testis.

It is found in the cell membrane. The protein localises to the cytoplasmic vesicle. The protein resides in the secretory vesicle. It localises to the acrosome membrane. Its subcellular location is the nucleus. Testis-specific protein that controls sperm transport and the timing of zona pellucida-evoked exocytosis of the sperm acrosome. The protein is Polycystin family receptor for egg jelly of Homo sapiens (Human).